A 293-amino-acid polypeptide reads, in one-letter code: N-acetylneuraminate lyase (293 aa).

2 residues coordinate aceneuramate: Ser-48 and Ser-49. The active-site Proton donor is the Tyr-137. The active-site Schiff-base intermediate with substrate is the Lys-165. Aceneuramate-binding residues include Thr-167, Gly-189, Asp-191, Glu-192, and Ser-208.

This sequence belongs to the DapA family. NanA subfamily. In terms of assembly, homotetramer.

It localises to the cytoplasm. It carries out the reaction aceneuramate = aldehydo-N-acetyl-D-mannosamine + pyruvate. Its pathway is amino-sugar metabolism; N-acetylneuraminate degradation; D-fructose 6-phosphate from N-acetylneuraminate: step 1/5. Its function is as follows. Catalyzes the reversible aldol cleavage of N-acetylneuraminic acid (sialic acid; Neu5Ac) to form pyruvate and N-acetylmannosamine (ManNAc) via a Schiff base intermediate. The chain is N-acetylneuraminate lyase from Staphylococcus aureus (strain MRSA252).